Here is a 129-residue protein sequence, read N- to C-terminus: Phosphoribosyl-AMP cyclohydrolase (129 aa).

D78 contributes to the Mg(2+) binding site. Position 79 (C79) interacts with Zn(2+). Mg(2+)-binding residues include D80 and D82. The Zn(2+) site is built by C96 and C103.

Belongs to the PRA-CH family. Homodimer. It depends on Mg(2+) as a cofactor. The cofactor is Zn(2+).

It localises to the cytoplasm. The enzyme catalyses 1-(5-phospho-beta-D-ribosyl)-5'-AMP + H2O = 1-(5-phospho-beta-D-ribosyl)-5-[(5-phospho-beta-D-ribosylamino)methylideneamino]imidazole-4-carboxamide. It functions in the pathway amino-acid biosynthesis; L-histidine biosynthesis; L-histidine from 5-phospho-alpha-D-ribose 1-diphosphate: step 3/9. Functionally, catalyzes the hydrolysis of the adenine ring of phosphoribosyl-AMP. This chain is Phosphoribosyl-AMP cyclohydrolase, found in Nitrosomonas europaea (strain ATCC 19718 / CIP 103999 / KCTC 2705 / NBRC 14298).